The chain runs to 142 residues: Transcriptional regulator MraZ (142 aa).

2 SpoVT-AbrB domains span residues 5–47 (EYPY…PLPG) and 76–119 (ASKA…NPQR).

It belongs to the MraZ family. Forms oligomers.

It is found in the cytoplasm. The protein localises to the nucleoid. This is Transcriptional regulator MraZ from Deinococcus radiodurans (strain ATCC 13939 / DSM 20539 / JCM 16871 / CCUG 27074 / LMG 4051 / NBRC 15346 / NCIMB 9279 / VKM B-1422 / R1).